Reading from the N-terminus, the 65-residue chain is LTCVTKNTIFGITTENCPAGQNLCFKRWHYVIPRYTEITRGCAATCPIPENYDSIHCCKTDKCNE.

4 cysteine pairs are disulfide-bonded: Cys-3–Cys-24, Cys-17–Cys-42, Cys-46–Cys-57, and Cys-58–Cys-63.

Belongs to the three-finger toxin family. Short-chain subfamily. Aminergic toxin sub-subfamily. As to expression, expressed by the venom gland.

The protein resides in the secreted. Functionally, potent antagonist (IC(50)=1-10 nM) of M4 (CHRM4) muscarinic receptors, and CHRM1, ADRA1A, ADRA2A and ADRA2C adrenergic receptors. Also antagonises ADRA1B and ADRA1D adrenergic receptors with a 10-times lower affinity. This chain is Muscarinic toxin 3, found in Dendroaspis angusticeps (Eastern green mamba).